A 775-amino-acid chain; its full sequence is 5-methyltetrahydropteroyltriglutamate--homocysteine methyltransferase (775 aa).

5-methyltetrahydropteroyltri-L-glutamate contacts are provided by residues 16–19 (REMK) and lysine 115. Residues 435–437 (IGS) and glutamate 488 contribute to the L-homocysteine site. Residues 435 to 437 (IGS) and glutamate 488 contribute to the L-methionine site. Residues 519 to 520 (RC) and tryptophan 565 contribute to the 5-methyltetrahydropteroyltri-L-glutamate site. Aspartate 603 is an L-homocysteine binding site. Residue aspartate 603 coordinates L-methionine. Residue glutamate 609 coordinates 5-methyltetrahydropteroyltri-L-glutamate. Zn(2+)-binding residues include histidine 645, cysteine 647, and glutamate 669. Residue histidine 698 is the Proton donor of the active site. Cysteine 730 contacts Zn(2+).

This sequence belongs to the vitamin-B12 independent methionine synthase family. It depends on Zn(2+) as a cofactor.

It catalyses the reaction 5-methyltetrahydropteroyltri-L-glutamate + L-homocysteine = tetrahydropteroyltri-L-glutamate + L-methionine. It functions in the pathway amino-acid biosynthesis; L-methionine biosynthesis via de novo pathway; L-methionine from L-homocysteine (MetE route): step 1/1. In terms of biological role, catalyzes the transfer of a methyl group from 5-methyltetrahydrofolate to homocysteine resulting in methionine formation. The sequence is that of 5-methyltetrahydropteroyltriglutamate--homocysteine methyltransferase from Coxiella burnetii (strain RSA 331 / Henzerling II).